We begin with the raw amino-acid sequence, 146 residues long: Cell division protein SepF (146 aa).

This sequence belongs to the SepF family. In terms of assembly, homodimer. Interacts with FtsZ.

Its subcellular location is the cytoplasm. In terms of biological role, cell division protein that is part of the divisome complex and is recruited early to the Z-ring. Probably stimulates Z-ring formation, perhaps through the cross-linking of FtsZ protofilaments. Its function overlaps with FtsA. In Alkaliphilus oremlandii (strain OhILAs) (Clostridium oremlandii (strain OhILAs)), this protein is Cell division protein SepF.